A 460-amino-acid chain; its full sequence is NADH-ubiquinone oxidoreductase chain 4 (460 aa).

A run of 12 helical transmembrane segments spans residues 20 to 42 (PKWL…LTWL), 61 to 81 (PLST…VLAS), 93 to 113 (QRLY…AFGA), 114 to 134 (TEII…LIII), 148 to 168 (TYFL…LLLL), 195 to 215 (IWWA…GVHL), 225 to 245 (PVAG…YGMM), 258 to 278 (LAYP…SICL), 285 to 304 (SLIA…GILI), 309 to 331 (GFTG…FCLA), 351 to 371 (MIFP…LALP), and 394 to 414 (IILT…LFLM).

The protein belongs to the complex I subunit 4 family.

The protein localises to the mitochondrion membrane. The enzyme catalyses a ubiquinone + NADH + 5 H(+)(in) = a ubiquinol + NAD(+) + 4 H(+)(out). Its function is as follows. Core subunit of the mitochondrial membrane respiratory chain NADH dehydrogenase (Complex I) that is believed to belong to the minimal assembly required for catalysis. Complex I functions in the transfer of electrons from NADH to the respiratory chain. The immediate electron acceptor for the enzyme is believed to be ubiquinone. The polypeptide is NADH-ubiquinone oxidoreductase chain 4 (MT-ND4) (Formosania lacustris (Oriental stream loach)).